Reading from the N-terminus, the 83-residue chain is Small ribosomal subunit protein eS27 (83 aa).

The C4-type zinc finger occupies 37–59 (CPGCFNITTVFSHAQTVVICGSC).

This sequence belongs to the eukaryotic ribosomal protein eS27 family. In terms of assembly, component of the small ribosomal subunit (SSU). Mature yeast ribosomes consist of a small (40S) and a large (60S) subunit. The 40S small subunit contains 1 molecule of ribosomal RNA (18S rRNA) and at least 33 different proteins. The large 60S subunit contains 3 rRNA molecules (25S, 5.8S and 5S rRNA) and at least 46 different proteins. Zn(2+) serves as cofactor.

Its subcellular location is the cytoplasm. Its function is as follows. Component of the ribosome, a large ribonucleoprotein complex responsible for the synthesis of proteins in the cell. The small ribosomal subunit (SSU) binds messenger RNAs (mRNAs) and translates the encoded message by selecting cognate aminoacyl-transfer RNA (tRNA) molecules. The large subunit (LSU) contains the ribosomal catalytic site termed the peptidyl transferase center (PTC), which catalyzes the formation of peptide bonds, thereby polymerizing the amino acids delivered by tRNAs into a polypeptide chain. The nascent polypeptides leave the ribosome through a tunnel in the LSU and interact with protein factors that function in enzymatic processing, targeting, and the membrane insertion of nascent chains at the exit of the ribosomal tunnel. The chain is Small ribosomal subunit protein eS27 (rps27) from Schizosaccharomyces pombe (strain 972 / ATCC 24843) (Fission yeast).